The sequence spans 166 residues: Coiled-coil domain-containing protein 12 (166 aa).

An N-acetylmethionine modification is found at M1. Positions 8–28 (VGRLEEEALRRKERLKALREK) form a coiled coil. Positions 21–53 (RLKALREKTGRKDREDGEPQTKQLREEGEEVGK) are enriched in basic and acidic residues. Positions 21–55 (RLKALREKTGRKDREDGEPQTKQLREEGEEVGKHR) are disordered. K53 bears the N6-acetyllysine mark. A Glycyl lysine isopeptide (Lys-Gly) (interchain with G-Cter in SUMO2) cross-link involves residue K94. Positions 115-144 (DLKRDVAKKLEKLEKRTQRAIAELIRERLK) form a coiled coil. The tract at residues 146–166 (QEDSLASAVDATTGQEACDSD) is disordered. S149 and S165 each carry phosphoserine.

This Mus musculus (Mouse) protein is Coiled-coil domain-containing protein 12 (Ccdc12).